The following is an 81-amino-acid chain: Small ribosomal subunit protein bS16 (81 aa).

The protein belongs to the bacterial ribosomal protein bS16 family.

The sequence is that of Small ribosomal subunit protein bS16 from Agathobacter rectalis (strain ATCC 33656 / DSM 3377 / JCM 17463 / KCTC 5835 / VPI 0990) (Eubacterium rectale).